We begin with the raw amino-acid sequence, 82 residues long: Large ribosomal subunit protein bL31B (82 aa).

It belongs to the bacterial ribosomal protein bL31 family. Type B subfamily. In terms of assembly, part of the 50S ribosomal subunit.

The chain is Large ribosomal subunit protein bL31B from Amoebophilus asiaticus (strain 5a2).